Here is a 611-residue protein sequence, read N- to C-terminus: Pseudomonine synthase PmsE (611 aa).

The region spanning 533–608 (VSVENTRTWL…SWWALVEARQ (76 aa)) is the Carrier domain. S569 is subject to O-(pantetheine 4'-phosphoryl)serine.

The protein belongs to the ATP-dependent AMP-binding enzyme family. The cofactor is pantetheine 4'-phosphate.

The catalysed reaction is salicylate + holo-[ACP] + ATP = salicyl-[ACP] + AMP + diphosphate. It participates in siderophore biosynthesis; pseudomonine biosynthesis. Involved in the biosynthesis of the siderophore pseudomonine. Specifically adenylates salicylate and loads it onto its peptidyl carrier domain, via a thioester linkage to the phosphopanthetheine moiety. In Pseudomonas entomophila (strain L48), this protein is Pseudomonine synthase PmsE.